A 368-amino-acid polypeptide reads, in one-letter code: Endophilin-A2 (368 aa).

Residues 1-21 (MSVAGLKKQFYKASQLVSEKV) form a membrane-binding amphipathic helix region. In terms of domain architecture, BAR spans 18–249 (SEKVGGAEGT…LKRRMREASS (232 aa)). A required for dimerization upon membrane association region spans residues 60–87 (PNPASRAKLTMLNTVSKIRGQVKNPGYP). Positions 145-250 (NLCEKDLKEI…KRRMREASSR (106 aa)) form a coiled coil. Positions 218–254 (LVDAQLDYHRQAVQILDELAEKLKRRMREASSRPKRE) are interaction with ARC. Residues 244–308 (MREASSRPKR…PSRSMPPLDQ (65 aa)) are disordered. Residues 245-263 (REASSRPKREYKPKPREPF) are compositionally biased toward basic and acidic residues. Residues Ser-288 and Ser-292 each carry the phosphoserine modification. The residue at position 298 (Thr-298) is a Phosphothreonine. The 60-residue stretch at 306–365 (LDQPSCKALYDFEPENDGELGFHEGDVITLTNQIDENWYEGMLDGQSGFFPLSYVEVLVP) folds into the SH3 domain. A Phosphotyrosine modification is found at Tyr-315.

It belongs to the endophilin family. Interacts with ARC. Interacts with SYNJ1 and DNM1. Interacts with PDCD6IP. Interacts with BIN2. Ubiquitous. Higher expression in pancreas, placenta, prostate, testis and uterus.

The protein localises to the cytoplasm. The protein resides in the early endosome membrane. It localises to the cell projection. Its subcellular location is the podosome. Implicated in endocytosis. May recruit other proteins to membranes with high curvature. In Homo sapiens (Human), this protein is Endophilin-A2 (SH3GL1).